A 268-amino-acid polypeptide reads, in one-letter code: MTTTPFNRLLLTGAAGGLGKVLRERLKGYAEVLRLSDISPMAPAAGPHEEVITCDLADKAAVHTLVEGVDAIIHFGGVSTEHAFEEILGPNICGVFHVYEAARKHGVKRIIFASSNHTIGFYRQDERIDAHAPRRPDSYYGLSKCYGEDVASFYFDRYGIETVSIRIGSSFPQPQNLRMLCTWLSYDDLVQLIERGLFTPGVGHTIVYGASDNRTVWWDNRHAAHLGYVPKDSSETFRAAVEAQPAPAADDPSMVYQGGAFAVAGPFN.

NAD(+) contacts are provided by residues 17–18, 37–39, 55–56, and 75–79; these read GL, DIS, DL, and FGGVS. Substrate-binding positions include Ser79 and 115-117; that span reads SNH. Tyr140 acts as the Proton acceptor in catalysis. Residue Lys144 participates in NAD(+) binding. Ser169 contacts substrate. Ser170 contacts NAD(+). Arg178 contacts substrate.

It belongs to the NAD(P)-dependent epimerase/dehydratase family. Homohexamer.

It catalyses the reaction beta-D-galacturonate + NAD(+) = D-galactaro-1,5-lactone + NADH + H(+). The catalysed reaction is beta-D-glucuronate + NAD(+) = D-glucaro-1,5-lactone + NADH + H(+). It participates in carbohydrate acid metabolism; D-galacturonate degradation via prokaryotic oxidative pathway. Its function is as follows. Catalyzes the oxidation of beta-D-galacturonate and beta-D-glucuronate to galactarate and D-glucarate, respectively. This chain is Uronate dehydrogenase (udh), found in Pseudomonas putida (strain ATCC 47054 / DSM 6125 / CFBP 8728 / NCIMB 11950 / KT2440).